We begin with the raw amino-acid sequence, 833 residues long: MTFYDHTAIEPKWQAFWADNHTFKTGTDASKPKFYALDMFPYPSGAGLHVGHPEGYTATDILSRFKRAQGHNILHPMGWDAFGLPAEQYAMDTGNDPAEFTAENIANFKRQINALGFSYDWDREVNTTDPNYYKWTQWIFTKLYEKGLAYEAEVPVNWVEELGTAIANEEVLPDGTSERGGYPVVRKPMRQWMLKITAYAERLLEDLEEVDWPESIKDMQRNWIGKSTGANVTFKVKDTDKDFTVFTTRPDTLFGATYAVLAPEHALVDAITTADQAEAVAKYKRQASLKSDLARTDLAKEKTGVWTGAYAINPVNGNEMPVWIADYVLASYGTGAIMAVPAHDERDWEFAKQFKLDIIPVLEGGNVEEAAFTEDGLHINSGFLDGLDKASAIAKMVEWLEAEGVGNEKVTYRLRDWLFSRQRYWGEPIPIIHWEDGTSTAVPESELPLVLPVTKDIRPSGTGESPLANVTDWLEVTREDGVKGRRETNTMPQWAGSSWYYLRYIDPHNTEKLADEELLKQWLPVDIYVGGAEHAVLHLLYARFWHKVLYDLGVVPTKEPFQKLFNQGMILGTSYRDSRGALVATDKVEKRDGSFFHVETGEELEQAPAKMSKSLKNVVNPDDVVEQYGADTLRVYEMFMGPLDASIAWSEEGLEGSRKFLDRVYRLITTKEITEENSGALDKVYNETVKAVTEQVDQMKFNTAIAQLMVFVNAANKEDKLFSDYAKGFVQLIAPFAPHLGEELWQALTASGESISYVPWPSYDESKLVENDVEIVVQIKGKVKAKLVVAKDLSREELQEVALANEKVQAEIAGKDIIKVIAVPNKLVNIVIK.

The 'HIGH' region motif lies at Pro41–His52. Positions Lys610–Ser614 match the 'KMSKS' region motif. Position 613 (Lys613) interacts with ATP.

This sequence belongs to the class-I aminoacyl-tRNA synthetase family.

Its subcellular location is the cytoplasm. The enzyme catalyses tRNA(Leu) + L-leucine + ATP = L-leucyl-tRNA(Leu) + AMP + diphosphate. This Streptococcus pyogenes serotype M1 protein is Leucine--tRNA ligase.